The following is a 424-amino-acid chain: Probable methyltransferase EP424R (424 aa).

An Adrift-type SAM-dependent 2'-O-MTase domain is found at 103–315; the sequence is QIVTNAWLKM…TYIVGKNRLR (213 aa). The S-adenosyl-L-methionine site is built by G135 and D228. The active-site Proton acceptor is K268.

The protein localises to the virion. The protein is Probable methyltransferase EP424R of Ornithodoros (relapsing fever ticks).